A 72-amino-acid polypeptide reads, in one-letter code: Translation initiation factor IF-1 (72 aa).

In terms of domain architecture, S1-like spans 1-72 (MAKEDTIQMQ…TRARIVFRAR (72 aa)).

The protein belongs to the IF-1 family. Component of the 30S ribosomal translation pre-initiation complex which assembles on the 30S ribosome in the order IF-2 and IF-3, IF-1 and N-formylmethionyl-tRNA(fMet); mRNA recruitment can occur at any time during PIC assembly.

Its subcellular location is the cytoplasm. One of the essential components for the initiation of protein synthesis. Stabilizes the binding of IF-2 and IF-3 on the 30S subunit to which N-formylmethionyl-tRNA(fMet) subsequently binds. Helps modulate mRNA selection, yielding the 30S pre-initiation complex (PIC). Upon addition of the 50S ribosomal subunit IF-1, IF-2 and IF-3 are released leaving the mature 70S translation initiation complex. The chain is Translation initiation factor IF-1 from Neisseria gonorrhoeae (strain ATCC 700825 / FA 1090).